The chain runs to 238 residues: Ribonuclease PH (238 aa).

Residues Arg-86 and 124-126 (GTR) contribute to the phosphate site.

It belongs to the RNase PH family. In terms of assembly, homohexameric ring arranged as a trimer of dimers.

It carries out the reaction tRNA(n+1) + phosphate = tRNA(n) + a ribonucleoside 5'-diphosphate. Phosphorolytic 3'-5' exoribonuclease that plays an important role in tRNA 3'-end maturation. Removes nucleotide residues following the 3'-CCA terminus of tRNAs; can also add nucleotides to the ends of RNA molecules by using nucleoside diphosphates as substrates, but this may not be physiologically important. Probably plays a role in initiation of 16S rRNA degradation (leading to ribosome degradation) during starvation. This Shigella flexneri serotype 5b (strain 8401) protein is Ribonuclease PH.